Consider the following 380-residue polypeptide: 1-deoxy-D-xylulose 5-phosphate reductoisomerase (380 aa).

NADPH contacts are provided by serine 10, glycine 11, serine 12, isoleucine 13, glycine 36, lysine 37, asparagine 38, and asparagine 120. Residue lysine 121 coordinates 1-deoxy-D-xylulose 5-phosphate. Glutamate 122 lines the NADPH pocket. Residue aspartate 146 coordinates Mn(2+). Positions 147, 148, 172, and 195 each coordinate 1-deoxy-D-xylulose 5-phosphate. Glutamate 148 contacts Mn(2+). Glycine 201 contributes to the NADPH binding site. Serine 208, asparagine 213, lysine 214, and glutamate 217 together coordinate 1-deoxy-D-xylulose 5-phosphate. Residue glutamate 217 participates in Mn(2+) binding.

This sequence belongs to the DXR family. Mg(2+) serves as cofactor. Mn(2+) is required as a cofactor.

It carries out the reaction 2-C-methyl-D-erythritol 4-phosphate + NADP(+) = 1-deoxy-D-xylulose 5-phosphate + NADPH + H(+). It functions in the pathway isoprenoid biosynthesis; isopentenyl diphosphate biosynthesis via DXP pathway; isopentenyl diphosphate from 1-deoxy-D-xylulose 5-phosphate: step 1/6. Functionally, catalyzes the NADPH-dependent rearrangement and reduction of 1-deoxy-D-xylulose-5-phosphate (DXP) to 2-C-methyl-D-erythritol 4-phosphate (MEP). The polypeptide is 1-deoxy-D-xylulose 5-phosphate reductoisomerase (Bacillus cereus (strain Q1)).